Reading from the N-terminus, the 268-residue chain is Fibroblast growth factor 5 (268 aa).

The signal sequence occupies residues 1–20 (MSLSFLLLLFFSHLILSAWA). The disordered stretch occupies residues 26–81 (LAPKGQPGPAATDRNPRGSSSRQSSSSAMSSSSASSSPAASLGSQGSGLEQSSFQW). Residues 43 to 80 (GSSSRQSSSSAMSSSSASSSPAASLGSQGSGLEQSSFQ) show a composition bias toward low complexity. Asn110 is a glycosylation site (N-linked (GlcNAc...) asparagine). The interval 233 to 255 (VPEKKKPPSPIKPKIPLSAPRKN) is disordered.

Belongs to the heparin-binding growth factors family. As to quaternary structure, interacts with FGFR1 and FGFR2. Affinity between fibroblast growth factors (FGFs) and their receptors is increased by heparan sulfate glycosaminoglycans that function as coreceptors. As to expression, expressed in neonatal brain.

The protein resides in the secreted. In terms of biological role, plays an important role in the regulation of cell proliferation and cell differentiation. Required for normal regulation of the hair growth cycle. Functions as an inhibitor of hair elongation by promoting progression from anagen, the growth phase of the hair follicle, into catagen the apoptosis-induced regression phase. This chain is Fibroblast growth factor 5 (FGF5), found in Homo sapiens (Human).